Consider the following 206-residue polypeptide: Large ribosomal subunit protein uL4 (206 aa).

Residues 55–80 form a disordered region; it reads AFVSGGGAKPWRQKGTGRARSGSNRS.

This sequence belongs to the universal ribosomal protein uL4 family. In terms of assembly, part of the 50S ribosomal subunit.

In terms of biological role, one of the primary rRNA binding proteins, this protein initially binds near the 5'-end of the 23S rRNA. It is important during the early stages of 50S assembly. It makes multiple contacts with different domains of the 23S rRNA in the assembled 50S subunit and ribosome. Forms part of the polypeptide exit tunnel. This Nitratidesulfovibrio vulgaris (strain DSM 19637 / Miyazaki F) (Desulfovibrio vulgaris) protein is Large ribosomal subunit protein uL4.